Reading from the N-terminus, the 122-residue chain is Replication termination protein (122 aa).

In terms of assembly, homodimer.

Its function is as follows. Plays a role in DNA replication and termination (fork arrest mechanism). Two dimers of rtp bind to the two inverted repeat regions (IRI and IRII) present in the termination site. The binding of each dimer is centered on an 8 bp direct repeat. The sequence is that of Replication termination protein (rtp) from Bacillus spizizenii (strain ATCC 23059 / NRRL B-14472 / W23) (Bacillus subtilis subsp. spizizenii).